A 368-amino-acid polypeptide reads, in one-letter code: uncharacterized protein (368 aa).

This sequence belongs to the YCR102c/YLR460c/YNL134c family.

This is an uncharacterized protein from Saccharomyces cerevisiae (strain ATCC 204508 / S288c) (Baker's yeast).